A 100-amino-acid chain; its full sequence is NADH-quinone oxidoreductase subunit K (100 aa).

A run of 3 helical transmembrane segments spans residues 4-24 (YEYYVVLSGLLMVLGLIGIII), 29-49 (IAMLLSTELMLNAVNIAFVAF), and 60-80 (VFVFFILTIAAAEAAVGLGLI).

Belongs to the complex I subunit 4L family. As to quaternary structure, NDH-1 is composed of 14 different subunits. Subunits NuoA, H, J, K, L, M, N constitute the membrane sector of the complex.

The protein localises to the cell inner membrane. It carries out the reaction a quinone + NADH + 5 H(+)(in) = a quinol + NAD(+) + 4 H(+)(out). In terms of biological role, NDH-1 shuttles electrons from NADH, via FMN and iron-sulfur (Fe-S) centers, to quinones in the respiratory chain. The immediate electron acceptor for the enzyme in this species is believed to be ubiquinone. Couples the redox reaction to proton translocation (for every two electrons transferred, four hydrogen ions are translocated across the cytoplasmic membrane), and thus conserves the redox energy in a proton gradient. This chain is NADH-quinone oxidoreductase subunit K, found in Persephonella marina (strain DSM 14350 / EX-H1).